Reading from the N-terminus, the 34-residue chain is GLIFNLDTGELCLQSAQCKSECCQEDSGLSLAXC.

Disulfide bonds link Cys12–Cys23 and Cys18–Cys34.

Belongs to the colipase family. Forms a 1:1 stoichiometric complex with pancreatic lipase. As to expression, expressed by the pancreas.

The protein resides in the secreted. Functionally, colipase is a cofactor of pancreatic lipase. It allows the lipase to anchor itself to the lipid-water interface. Without colipase the enzyme is washed off by bile salts, which have an inhibitory effect on the lipase. This chain is Colipase (CLPS), found in Gallus gallus (Chicken).